We begin with the raw amino-acid sequence, 449 residues long: MREIIHLSTGQCGNQIGAAFWETICGEHGLDNNGTYVGNNELQKSKLDVYFNEATSGKYVPRAVLVDLEPGTIDNVKTSQIGNLFRPDNFIFGQSSAGNVWAKGHYTEGAELVDSVLDVVRREAEGCDSLQGFQITHSLGGGTGSGMGTLLISKIREEFPDTMMATFSVVPSPKVSDTVIEPYNATLSVHQLVENSDETFCIDNEALYNICQNTLKLPQPSYAELNNLVSSVMSGVTTSLRYPGQLNSDLRKLAVNLVPFPRLHFFMVGYAPLTSMGSKSFRSVTVPELTQQMFDAKNMMAASDPRNGRYLTVAAFFRGKVSVKEVDDEMHKIQTRNSSYFVDWIPNNVQTAVCSVPPKDLDMSATFIGNSTSIQELFKRVGDQFSAMFRRKAFLHWYTSEGMDEMEFTEAESNMNDLVSEYQQYQEASIDEEELEYADEIPLEDAAME.

The GTP site is built by glutamine 11, glutamate 69, serine 138, glycine 142, threonine 143, glycine 144, asparagine 204, and asparagine 226. A Mg(2+)-binding site is contributed by glutamate 69.

It belongs to the tubulin family. As to quaternary structure, dimer of alpha and beta chains. A typical microtubule is a hollow water-filled tube with an outer diameter of 25 nm and an inner diameter of 15 nM. Alpha-beta heterodimers associate head-to-tail to form protofilaments running lengthwise along the microtubule wall with the beta-tubulin subunit facing the microtubule plus end conferring a structural polarity. Microtubules usually have 13 protofilaments but different protofilament numbers can be found in some organisms and specialized cells. Mg(2+) serves as cofactor.

Its subcellular location is the cytoplasm. It is found in the cytoskeleton. In terms of biological role, tubulin is the major constituent of microtubules, a cylinder consisting of laterally associated linear protofilaments composed of alpha- and beta-tubulin heterodimers. Microtubules grow by the addition of GTP-tubulin dimers to the microtubule end, where a stabilizing cap forms. Below the cap, tubulin dimers are in GDP-bound state, owing to GTPase activity of alpha-tubulin. The sequence is that of Tubulin beta chain (TUB2) from Candida albicans (Yeast).